A 245-amino-acid polypeptide reads, in one-letter code: Protein-glutamine gamma-glutamyltransferase (245 aa).

This sequence belongs to the bacillus TGase family.

It catalyses the reaction L-glutaminyl-[protein] + L-lysyl-[protein] = [protein]-L-lysyl-N(6)-5-L-glutamyl-[protein] + NH4(+). Probably plays a role in the assembly of the spore coat proteins by catalyzing epsilon-(gamma-glutamyl)lysine cross-links. In wild-type spores at 37 degrees Celsius, tgl mediates the cross-linking of GerQ in higher molecular mass forms, probably in cooperation with YabG. This chain is Protein-glutamine gamma-glutamyltransferase (tgl), found in Bacillus subtilis (strain 168).